The following is a 450-amino-acid chain: Tubulin alpha chain (450 aa).

An MREC motif motif is present at residues 1-4 (MREC). Residue Gln-11 participates in GTP binding. N6-acetyllysine is present on Lys-40. Residues Glu-71, Ser-140, Gly-144, Thr-145, Thr-179, Asn-206, and Asn-228 each contribute to the GTP site. Glu-71 is a binding site for Mg(2+). The active site involves Glu-254. Glu-444 is subject to 5-glutamyl polyglutamate.

The protein belongs to the tubulin family. As to quaternary structure, dimer of alpha and beta chains. A typical microtubule is a hollow water-filled tube with an outer diameter of 25 nm and an inner diameter of 15 nM. Alpha-beta heterodimers associate head-to-tail to form protofilaments running lengthwise along the microtubule wall with the beta-tubulin subunit facing the microtubule plus end conferring a structural polarity. Microtubules usually have 13 protofilaments but different protofilament numbers can be found in some organisms and specialized cells. Mg(2+) is required as a cofactor. In terms of processing, some glutamate residues at the C-terminus are polyglycylated, resulting in polyglycine chains on the gamma-carboxyl group. Glycylation is mainly limited to tubulin incorporated into axonemes (cilia and flagella) whereas glutamylation is prevalent in neuronal cells, centrioles, axonemes, and the mitotic spindle. Both modifications can coexist on the same protein on adjacent residues, and lowering polyglycylation levels increases polyglutamylation, and reciprocally. The precise function of polyglycylation is still unclear. Post-translationally, some glutamate residues at the C-terminus are polyglutamylated, resulting in polyglutamate chains on the gamma-carboxyl group. Polyglutamylation plays a key role in microtubule severing by spastin (SPAST). SPAST preferentially recognizes and acts on microtubules decorated with short polyglutamate tails: severing activity by SPAST increases as the number of glutamates per tubulin rises from one to eight, but decreases beyond this glutamylation threshold. Acetylation of alpha chains at Lys-40 is located inside the microtubule lumen. This modification has been correlated with increased microtubule stability, intracellular transport and ciliary assembly. In terms of processing, undergoes a tyrosination/detyrosination cycle, the cyclic removal and re-addition of a C-terminal tyrosine residue by the enzymes tubulin tyrosine carboxypeptidase (MATCAP, VASH1 or VASH2) and tubulin tyrosine ligase (TTL), respectively. Post-translationally, tyrosination promotes microtubule interaction with CAP-Gly microtubule plus-end tracking proteins. Tyrosinated tubulins regulate the initiation of dynein-driven motility. Detyrosination is involved in metaphase plate congression by guiding chromosomes during mitosis. Detyrosination increases microtubules-dependent mechanotransduction in dystrophic cardiac and skeletal muscle. In cardiomyocytes, detyrosinated microtubules are required to resist to contractile compression during contraction.

Its subcellular location is the cytoplasm. The protein localises to the cytoskeleton. It catalyses the reaction GTP + H2O = GDP + phosphate + H(+). Functionally, tubulin is the major constituent of microtubules, a cylinder consisting of laterally associated linear protofilaments composed of alpha- and beta-tubulin heterodimers. Microtubules grow by the addition of GTP-tubulin dimers to the microtubule end, where a stabilizing cap forms. Below the cap, tubulin dimers are in GDP-bound state, owing to GTPase activity of alpha-tubulin. In Notophthalmus viridescens (Eastern newt), this protein is Tubulin alpha chain.